The primary structure comprises 157 residues: 2-C-methyl-D-erythritol 2,4-cyclodiphosphate synthase (157 aa).

2 residues coordinate a divalent metal cation: aspartate 8 and histidine 10. 4-CDP-2-C-methyl-D-erythritol 2-phosphate-binding positions include 8–10 and 34–35; these read DVH and HS. Histidine 42 contributes to the a divalent metal cation binding site. Residues 56–58, 61–65, 132–135, phenylalanine 139, and arginine 142 each bind 4-CDP-2-C-methyl-D-erythritol 2-phosphate; these read DIG, FPDTD, and TTTE.

It belongs to the IspF family. Homotrimer. The cofactor is a divalent metal cation.

The catalysed reaction is 4-CDP-2-C-methyl-D-erythritol 2-phosphate = 2-C-methyl-D-erythritol 2,4-cyclic diphosphate + CMP. The protein operates within isoprenoid biosynthesis; isopentenyl diphosphate biosynthesis via DXP pathway; isopentenyl diphosphate from 1-deoxy-D-xylulose 5-phosphate: step 4/6. Functionally, involved in the biosynthesis of isopentenyl diphosphate (IPP) and dimethylallyl diphosphate (DMAPP), two major building blocks of isoprenoid compounds. Catalyzes the conversion of 4-diphosphocytidyl-2-C-methyl-D-erythritol 2-phosphate (CDP-ME2P) to 2-C-methyl-D-erythritol 2,4-cyclodiphosphate (ME-CPP) with a corresponding release of cytidine 5-monophosphate (CMP). The chain is 2-C-methyl-D-erythritol 2,4-cyclodiphosphate synthase from Pseudomonas putida (strain W619).